The sequence spans 529 residues: Ribonuclease Y (529 aa).

The helical transmembrane segment at 4 to 24 (GLIYISLEVLVACLITALIMY) threads the bilayer. Residues 216 to 297 (LTSRIALPCS…NRIEEVYHRV (82 aa)) enclose the KH domain. The HD domain maps to 342 to 435 (ALQHSKEVAL…VCAADALSAG (94 aa)).

The protein belongs to the RNase Y family.

It localises to the cell membrane. In terms of biological role, endoribonuclease that initiates mRNA decay. The chain is Ribonuclease Y from Helicobacter pylori (strain J99 / ATCC 700824) (Campylobacter pylori J99).